The chain runs to 78 residues: Neurotoxin 3FTx-LK (78 aa).

A signal peptide spans 1–21 (MKTLLLTLVVVTIVCLDLGYT). 4 disulfide bridges follow: Cys24–Cys42, Cys35–Cys60, Cys64–Cys70, and Cys71–Cys76.

Expressed by the venom gland.

Its subcellular location is the secreted. Its function is as follows. Blocks both the muscle-twitch response to nerve stimulation and the response to exogenous acetylcholine. This is Neurotoxin 3FTx-LK from Bungarus fasciatus (Banded krait).